The chain runs to 497 residues: Cysteine--tRNA ligase (497 aa).

C32 is a binding site for Zn(2+). A 'HIGH' region motif is present at residues 34–44; it reads PTVYGEGHLGH. Positions 228, 253, and 257 each coordinate Zn(2+). Residues 285–289 carry the 'KMSKS' region motif; sequence KMGKS. Residue K288 participates in ATP binding.

Belongs to the class-I aminoacyl-tRNA synthetase family. In terms of assembly, monomer. Requires Zn(2+) as cofactor.

Its subcellular location is the cytoplasm. The enzyme catalyses tRNA(Cys) + L-cysteine + ATP = L-cysteinyl-tRNA(Cys) + AMP + diphosphate. This is Cysteine--tRNA ligase from Cytophaga hutchinsonii (strain ATCC 33406 / DSM 1761 / CIP 103989 / NBRC 15051 / NCIMB 9469 / D465).